Reading from the N-terminus, the 140-residue chain is Nucleoside diphosphate kinase (140 aa).

The ATP site is built by Lys11, Phe59, Arg87, Thr93, Arg104, and Asn114. The active-site Pros-phosphohistidine intermediate is His117.

The protein belongs to the NDK family. In terms of assembly, homotetramer. It depends on Mg(2+) as a cofactor.

The protein resides in the cytoplasm. The catalysed reaction is a 2'-deoxyribonucleoside 5'-diphosphate + ATP = a 2'-deoxyribonucleoside 5'-triphosphate + ADP. It carries out the reaction a ribonucleoside 5'-diphosphate + ATP = a ribonucleoside 5'-triphosphate + ADP. In terms of biological role, major role in the synthesis of nucleoside triphosphates other than ATP. The ATP gamma phosphate is transferred to the NDP beta phosphate via a ping-pong mechanism, using a phosphorylated active-site intermediate. The sequence is that of Nucleoside diphosphate kinase from Maricaulis maris (strain MCS10) (Caulobacter maris).